Here is a 151-residue protein sequence, read N- to C-terminus: Ribosome maturation factor RimP (151 aa).

This sequence belongs to the RimP family.

It localises to the cytoplasm. In terms of biological role, required for maturation of 30S ribosomal subunits. This Shewanella woodyi (strain ATCC 51908 / MS32) protein is Ribosome maturation factor RimP.